Here is a 151-residue protein sequence, read N- to C-terminus: Nucleoside diphosphate kinase (151 aa).

Residues Lys-11, Phe-59, Arg-87, Thr-93, Arg-104, and Asn-114 each coordinate ATP. Residue His-117 is the Pros-phosphohistidine intermediate of the active site.

The protein belongs to the NDK family. In terms of assembly, homotetramer. Mg(2+) is required as a cofactor.

It is found in the cytoplasm. The catalysed reaction is a 2'-deoxyribonucleoside 5'-diphosphate + ATP = a 2'-deoxyribonucleoside 5'-triphosphate + ADP. It catalyses the reaction a ribonucleoside 5'-diphosphate + ATP = a ribonucleoside 5'-triphosphate + ADP. Major role in the synthesis of nucleoside triphosphates other than ATP. The ATP gamma phosphate is transferred to the NDP beta phosphate via a ping-pong mechanism, using a phosphorylated active-site intermediate. The polypeptide is Nucleoside diphosphate kinase (Prochlorococcus marinus (strain MIT 9211)).